Reading from the N-terminus, the 248-residue chain is tRNA (guanine-N(1)-)-methyltransferase (248 aa).

S-adenosyl-L-methionine contacts are provided by residues glycine 113 and 133-138 (IGDFVL).

The protein belongs to the RNA methyltransferase TrmD family. Homodimer.

It is found in the cytoplasm. The catalysed reaction is guanosine(37) in tRNA + S-adenosyl-L-methionine = N(1)-methylguanosine(37) in tRNA + S-adenosyl-L-homocysteine + H(+). Functionally, specifically methylates guanosine-37 in various tRNAs. The polypeptide is tRNA (guanine-N(1)-)-methyltransferase (Dehalococcoides mccartyi (strain CBDB1)).